We begin with the raw amino-acid sequence, 186 residues long: MDRYFFLQDATTVAKLLLGNLLIRKIDKEEIVTRIVETEAYMGITDSACHSYGGKITNRTSAMYRIGGYSYVYIIYGMHYMFNVVTADKNNPQAVLIRSVEPISPLLGEKSILTNGPGKLTKFLNIDLTFNKVDLIGNNELFLQRGLNLDFNIVCSKRININYAQESDINKLWRFYIKDNKFVSRR.

This sequence belongs to the DNA glycosylase MPG family.

The sequence is that of Putative 3-methyladenine DNA glycosylase from Borreliella burgdorferi (strain ATCC 35210 / DSM 4680 / CIP 102532 / B31) (Borrelia burgdorferi).